We begin with the raw amino-acid sequence, 233 residues long: Probable chemoreceptor glutamine deamidase CheD (233 aa).

The protein belongs to the CheD family.

It carries out the reaction L-glutaminyl-[protein] + H2O = L-glutamyl-[protein] + NH4(+). Its function is as follows. Probably deamidates glutamine residues to glutamate on methyl-accepting chemotaxis receptors (MCPs), playing an important role in chemotaxis. This Ralstonia nicotianae (strain ATCC BAA-1114 / GMI1000) (Ralstonia solanacearum) protein is Probable chemoreceptor glutamine deamidase CheD.